The primary structure comprises 590 residues: V-type ATP synthase alpha chain (590 aa).

231-238 (GPFGSGKT) contributes to the ATP binding site.

This sequence belongs to the ATPase alpha/beta chains family.

The enzyme catalyses ATP + H2O + 4 H(+)(in) = ADP + phosphate + 5 H(+)(out). Functionally, produces ATP from ADP in the presence of a proton gradient across the membrane. The V-type alpha chain is a catalytic subunit. The sequence is that of V-type ATP synthase alpha chain from Clostridium botulinum (strain Langeland / NCTC 10281 / Type F).